The primary structure comprises 244 residues: Dirigent protein 18 (244 aa).

An N-terminal signal peptide occupies residues 1 to 25 (MMKQSPFSLLTSIFLIAALFTATTA).

This sequence belongs to the plant dirigent protein family. In terms of assembly, homodimer.

The protein localises to the secreted. It localises to the extracellular space. Its subcellular location is the apoplast. Dirigent proteins impart stereoselectivity on the phenoxy radical-coupling reaction, yielding optically active lignans from two molecules of coniferyl alcohol in the biosynthesis of lignans, flavonolignans, and alkaloids and thus plays a central role in plant secondary metabolism. The chain is Dirigent protein 18 (DIR18) from Arabidopsis thaliana (Mouse-ear cress).